The sequence spans 513 residues: Pleiotropic regulator 1 (513 aa).

An N-acetylmethionine modification is found at methionine 1. The interval 60–79 (TSKENLKEKGPQNATDSYPH) is disordered. Serine 119 carries the post-translational modification Phosphoserine. Residues 136-160 (VDANRTGPAGSEYRHPGASDRSQPT) form a disordered region. Serine 200 carries the phosphoserine modification. WD repeat units follow at residues 201–240 (GHLGWVRCIAVEPGNQWFVTGSADRTIKIWDLASGKLKLS), 243–282 (GHISTVRGVIVSTRSPYLFSCGEDKQVKCWDLEYNKVIRH), 285–324 (GHLSAVYGLDLHPTLDVLVTCSRDSTARIWDVRTKASVHT), 327–366 (GHTNAVATVRCQAAEPQIITGSHDTTIRLWDLVAGKTRVT), 369–409 (NHKK…QNLS), 410–448 (GHNAIINTLAVNADGVLVSGADNGTMHLWDWRTGYNFQR), and 459–498 (DSESGIFACAFDRSESRLLTAEADKTIKVYREDETATEET). Phosphoserine is present on serine 390.

The protein belongs to the WD repeat PRL1/PRL2 family. In terms of assembly, identified in the spliceosome C complex. Component of the PRP19-CDC5L splicing complex composed of a core complex comprising a homotetramer of PRPF19, CDC5L, PLRG1 and BCAS2, and at least three less stably associated proteins CTNNBL1, CWC15 and HSPA8. Interacts (via its WD40 repeat domain) directly with CDC5L (via its C-terminal); the interaction is required for mRNA splicing but not for spliceosome assembly. Component of the minor spliceosome, which splices U12-type introns. Within this complex, interacts with CRIPT. Also interacts directly in the complex with BCAS2 and PRPF19. Interacts with USB1.

It localises to the nucleus. The protein resides in the nucleus speckle. Involved in pre-mRNA splicing as component of the spliceosome. Component of the PRP19-CDC5L complex that forms an integral part of the spliceosome and is required for activating pre-mRNA splicing. As a component of the minor spliceosome, involved in the splicing of U12-type introns in pre-mRNAs. In Mus musculus (Mouse), this protein is Pleiotropic regulator 1 (Plrg1).